The sequence spans 394 residues: Elongation factor Tu 2 (394 aa).

Residues 10-204 (KPHVNVGTIG…FLDSYIPEPE (195 aa)) form the tr-type G domain. Residues 19-26 (GHVDHGKT) are G1. GTP is bound at residue 19–26 (GHVDHGKT). Threonine 26 is a Mg(2+) binding site. The segment at 60–64 (GITIN) is G2. The tract at residues 81–84 (DCPG) is G3. GTP contacts are provided by residues 81-85 (DCPGH) and 136-139 (NKCD). A G4 region spans residues 136–139 (NKCD). Residues 174 to 176 (SAL) form a G5 region.

The protein belongs to the TRAFAC class translation factor GTPase superfamily. Classic translation factor GTPase family. EF-Tu/EF-1A subfamily. Monomer.

The protein localises to the cytoplasm. It catalyses the reaction GTP + H2O = GDP + phosphate + H(+). GTP hydrolase that promotes the GTP-dependent binding of aminoacyl-tRNA to the A-site of ribosomes during protein biosynthesis. The chain is Elongation factor Tu 2 from Escherichia coli O139:H28 (strain E24377A / ETEC).